The following is a 269-amino-acid chain: Phosphate import ATP-binding protein PstB 2 (269 aa).

The ABC transporter domain occupies 23–264 (LEVKDLSIYY…PKKQKTEDYI (242 aa)). An ATP-binding site is contributed by 55-62 (GPSGCGKS).

The protein belongs to the ABC transporter superfamily. Phosphate importer (TC 3.A.1.7) family. The complex is composed of two ATP-binding proteins (PstB), two transmembrane proteins (PstC and PstA) and a solute-binding protein (PstS).

The protein localises to the cell membrane. It carries out the reaction phosphate(out) + ATP + H2O = ADP + 2 phosphate(in) + H(+). In terms of biological role, part of the ABC transporter complex PstSACB involved in phosphate import. Responsible for energy coupling to the transport system. This chain is Phosphate import ATP-binding protein PstB 2, found in Bacillus subtilis (strain 168).